Reading from the N-terminus, the 235-residue chain is Proteasome subunit alpha type-2 (235 aa).

Belongs to the peptidase T1A family. As to quaternary structure, the 26S proteasome consists of a 20S proteasome core and two 19S regulatory subunits. The 20S proteasome core is composed of 28 subunits that are arranged in four stacked rings, resulting in a barrel-shaped structure. The two end rings are each formed by seven alpha subunits, and the two central rings are each formed by seven beta subunits. The catalytic chamber with the active sites is on the inside of the barrel.

It is found in the cytoplasm. The protein localises to the nucleus. Its function is as follows. The proteasome is a multicatalytic proteinase complex which is characterized by its ability to cleave peptides with Arg, Phe, Tyr, Leu, and Glu adjacent to the leaving group at neutral or slightly basic pH. The proteasome has an ATP-dependent proteolytic activity. The chain is Proteasome subunit alpha type-2 (PAB1) from Oryza sativa subsp. indica (Rice).